The sequence spans 300 residues: 4-hydroxy-tetrahydrodipicolinate synthase (300 aa).

Position 49 (T49) interacts with pyruvate. Y137 (proton donor/acceptor) is an active-site residue. Catalysis depends on K165, which acts as the Schiff-base intermediate with substrate. I207 contacts pyruvate.

The protein belongs to the DapA family. In terms of assembly, homotetramer; dimer of dimers.

The protein localises to the cytoplasm. It carries out the reaction L-aspartate 4-semialdehyde + pyruvate = (2S,4S)-4-hydroxy-2,3,4,5-tetrahydrodipicolinate + H2O + H(+). The protein operates within amino-acid biosynthesis; L-lysine biosynthesis via DAP pathway; (S)-tetrahydrodipicolinate from L-aspartate: step 3/4. Catalyzes the condensation of (S)-aspartate-beta-semialdehyde [(S)-ASA] and pyruvate to 4-hydroxy-tetrahydrodipicolinate (HTPA). This is 4-hydroxy-tetrahydrodipicolinate synthase from Nitrosospira multiformis (strain ATCC 25196 / NCIMB 11849 / C 71).